The following is an 818-amino-acid chain: uncharacterized protein (818 aa).

Composition is skewed to low complexity over residues 1–33 (MYNN…NYIS), 44–68 (NNFL…PQQQ), and 97–150 (NNSN…TKSN). Disordered regions lie at residues 1-68 (MYNN…PQQQ), 92-150 (LNTG…TKSN), 164-220 (KLDN…KYHE), 284-306 (NMNG…NNSD), and 415-445 (NINK…NNNN). Acidic residues-rich tracts occupy residues 172-190 (SEEE…EEKE) and 205-214 (DNNSQDEDKE). Positions 284 to 302 (NMNGSSDSSDSSNSSGHSR) are enriched in low complexity. The helical transmembrane segment at 534-554 (IIAIIVIVWPLIANLTYKFIV) threads the bilayer. Positions 779–808 (ANNFMSDSNRSPSSSSSSSSSTSDSENGML) are disordered. A compositionally biased stretch (low complexity) spans 784 to 803 (SDSNRSPSSSSSSSSSTSDS).

Its subcellular location is the membrane. This is an uncharacterized protein from Dictyostelium discoideum (Social amoeba).